The chain runs to 299 residues: Bifunctional methyltransferase-like/endonuclease (299 aa).

The interval 1-80 (MLSSKLLDIN…NLIVSPMQKA (80 aa)) is probable methylated-DNA--protein-cysteine methyltransferase-like. Residues 81-299 (LLEKEVKIIG…GRGDSNPGRD (219 aa)) form an endonuclease V region. Aspartate 135 and asparagine 197 together coordinate Mg(2+).

This sequence in the N-terminal section; belongs to the MGMT family. In the C-terminal section; belongs to the endonuclease V family. Requires Mg(2+) as cofactor.

It is found in the cytoplasm. It carries out the reaction Endonucleolytic cleavage at apurinic or apyrimidinic sites to products with a 5'-phosphate.. In terms of biological role, DNA repair enzyme involved in the repair of deaminated bases. Selectively cleaves double-stranded DNA at the second phosphodiester bond 3' to a deoxyinosine leaving behind the intact lesion on the nicked DNA. This chain is Bifunctional methyltransferase-like/endonuclease, found in Nanoarchaeum equitans (strain Kin4-M).